The sequence spans 468 residues: 6-phosphogluconate dehydrogenase, decarboxylating (468 aa).

NADP(+)-binding positions include 9–14 (GLAVMG), 32–34 (NRS), 73–75 (VQA), and Asn-101. Residues Asn-101 and 127-129 (SGG) each bind substrate. Lys-182 (proton acceptor) is an active-site residue. 185-186 (HN) is a substrate binding site. Glu-189 functions as the Proton donor in the catalytic mechanism. Substrate-binding residues include Tyr-190, Lys-259, Arg-286, Arg-444, and His-450.

This sequence belongs to the 6-phosphogluconate dehydrogenase family. Homodimer.

The enzyme catalyses 6-phospho-D-gluconate + NADP(+) = D-ribulose 5-phosphate + CO2 + NADPH. It participates in carbohydrate degradation; pentose phosphate pathway; D-ribulose 5-phosphate from D-glucose 6-phosphate (oxidative stage): step 3/3. In terms of biological role, catalyzes the oxidative decarboxylation of 6-phosphogluconate to ribulose 5-phosphate and CO(2), with concomitant reduction of NADP to NADPH. The sequence is that of 6-phosphogluconate dehydrogenase, decarboxylating (gnd) from Staphylococcus aureus (strain COL).